A 209-amino-acid polypeptide reads, in one-letter code: uncharacterized protein (209 aa).

Its subcellular location is the plastid. The protein localises to the chloroplast. This is an uncharacterized protein from Porphyra purpurea (Red seaweed).